The chain runs to 259 residues: Global transcriptional regulator CodY (259 aa).

A GAF domain region spans residues 1 to 155 (MALLQKTRKI…GATVVGMEIL (155 aa)). Positions 203 to 222 (ASKIADRVGITRSVIVNALR) form a DNA-binding region, H-T-H motif. Ser215 is modified (phosphoserine).

The protein belongs to the CodY family.

It localises to the cytoplasm. Its function is as follows. DNA-binding global transcriptional regulator which is involved in the adaptive response to starvation and acts by directly or indirectly controlling the expression of numerous genes in response to nutrient availability. During rapid exponential growth, CodY is highly active and represses genes whose products allow adaptation to nutrient depletion. The sequence is that of Global transcriptional regulator CodY from Bacillus licheniformis (strain ATCC 14580 / DSM 13 / JCM 2505 / CCUG 7422 / NBRC 12200 / NCIMB 9375 / NCTC 10341 / NRRL NRS-1264 / Gibson 46).